The chain runs to 133 residues: ATP synthase epsilon chain, chloroplastic (133 aa).

Belongs to the ATPase epsilon chain family. As to quaternary structure, F-type ATPases have 2 components, CF(1) - the catalytic core - and CF(0) - the membrane proton channel. CF(1) has five subunits: alpha(3), beta(3), gamma(1), delta(1), epsilon(1). CF(0) has three main subunits: a, b and c.

The protein resides in the plastid. It localises to the chloroplast thylakoid membrane. Produces ATP from ADP in the presence of a proton gradient across the membrane. This Mesostigma viride (Green alga) protein is ATP synthase epsilon chain, chloroplastic.